The primary structure comprises 165 residues: Nucleotide-binding protein Pro_0479 (165 aa).

Belongs to the YajQ family.

In terms of biological role, nucleotide-binding protein. The protein is Nucleotide-binding protein Pro_0479 of Prochlorococcus marinus (strain SARG / CCMP1375 / SS120).